Consider the following 882-residue polypeptide: Translation initiation factor IF-2 (882 aa).

Residues 50-299 form a disordered region; the sequence is SFKSANTTKP…KERPLPETLV (250 aa). Basic and acidic residues-rich tracts occupy residues 60-71 and 84-96; these read STEKDSKNSSRK and RRRDNKNDHDNRH. A compositionally biased stretch (basic residues) spans 97–108; sequence GNNKRRNNKFKK. Composition is skewed to basic and acidic residues over residues 109 to 133, 169 to 183, 232 to 242, and 250 to 263; these read QQNDRRAERNKPQTEAKSAARDLLN, KKVENTRKPKEEKLE, QKEETKPTRKK, and EVPDYERERSEHSD. Positions 264-277 are enriched in basic residues; it reads KARRRRNKKNKRIN. Residues 278–294 show a composition bias toward basic and acidic residues; the sequence is QSKEIKKQPTQRKERPL. Positions 383–552 constitute a tr-type G domain; it reads KRPPVVTIMG…LLQADVMELK (170 aa). A G1 region spans residues 392–399; the sequence is GHVDHGKT. 392–399 contributes to the GTP binding site; that stretch reads GHVDHGKT. Residues 417-421 are G2; the sequence is GITQK. Residues 438–441 are G3; sequence DTPG. Residues 438-442 and 492-495 each bind GTP; these read DTPGH and NKID. Residues 492-495 are G4; sequence NKID. The segment at 528–530 is G5; that stretch reads SAK.

This sequence belongs to the TRAFAC class translation factor GTPase superfamily. Classic translation factor GTPase family. IF-2 subfamily.

Its subcellular location is the cytoplasm. Its function is as follows. One of the essential components for the initiation of protein synthesis. Protects formylmethionyl-tRNA from spontaneous hydrolysis and promotes its binding to the 30S ribosomal subunits. Also involved in the hydrolysis of GTP during the formation of the 70S ribosomal complex. The sequence is that of Translation initiation factor IF-2 from Lactobacillus gasseri (strain ATCC 33323 / DSM 20243 / BCRC 14619 / CIP 102991 / JCM 1131 / KCTC 3163 / NCIMB 11718 / NCTC 13722 / AM63).